Here is a 185-residue protein sequence, read N- to C-terminus: Ribosome-recycling factor (185 aa).

Belongs to the RRF family.

The protein localises to the cytoplasm. Functionally, responsible for the release of ribosomes from messenger RNA at the termination of protein biosynthesis. May increase the efficiency of translation by recycling ribosomes from one round of translation to another. The polypeptide is Ribosome-recycling factor (Streptomyces avermitilis (strain ATCC 31267 / DSM 46492 / JCM 5070 / NBRC 14893 / NCIMB 12804 / NRRL 8165 / MA-4680)).